The primary structure comprises 540 residues: FAD-binding monooxygenase lolF2 (540 aa).

FAD contacts are provided by residues 43–46 and 55–58; these read VWRE and DSLF. NADP(+)-binding positions include 53–55, 182–188, and 205–206; these read AVD, TGPSGVQ, and QS.

The protein belongs to the FAD-binding monooxygenase family. Requires FAD as cofactor.

The protein operates within alkaloid biosynthesis. FAD-binding monooxygenase; part of the gene cluster that mediates the biosynthesis of loline alkaloids, potent insecticidal agents composed of a pyrrolizidine ring system and an uncommon ether bridge linking carbons 2 and 7. Lolines are structurally differentiated by the various modifications of the L-amino group and include norloline, loline, N-methylloline, N-acetylloline, N-acetylnorloline, and N-formylloline. The first committed step is the condensation of O-acetyl-L-homoserine (derived from L-aspartic acid) and L-proline, probably catalyzed by the gamma-type pyridoxal 5'-phosphate(PLP)-dependent enzyme lolC, to give the diamino diacid, NACPP. Ensuing cyclization, decarboxylation, and acetylation steps yield 1-exo-acetamidopyrrolizidine (AcAP). LolO is required for installation of the ether bridge upon the pathway intermediate, 1-exo-acetamidopyrrolizidine (AcAP). In sequential 2-oxoglutarate- and O(2)-consuming steps, lolO removes hydrogens from C2 and C7 of AcAP to form both carbon-oxygen bonds in N-acetylnorloline (NANL), the precursor to all other lolines. The enzymes lolD, lolE, lolF and lolT have also been proposed to be involved in the ether-bridge installation. Further processing of the exocyclic moiety of NANL by fungal N-acetamidase (LolN), methyltransferase (LolM), and cytochrome P450 (LolP) enzymes, with occasional involvement of a plant acetyltransferase, generates the other known lolines. LolN transforms NANL to norlonine which is monomethylated and dimethylated to respectively lonine and N-methyllonine (NML) by lolM. LolP catalyzes hydroxylation of the methyl group in N-methylloline (NML) and further oxygenation to N-formylloline (NFL). A plant acetyltransferase is responsible for the acetylation of loline to form N-acetylloline (NAL). LolA might interact with aspartate kinase to prevent feedback inhibition of its activity by these end products and thereby promote production of l-homoserine from l-aspartate. The sequence is that of FAD-binding monooxygenase lolF2 from Epichloe uncinata (Endophyte fungus).